Consider the following 323-residue polypeptide: MSKIFEDNSLTIGHTPLVRLNRIGNGRILAKVESRNPSFSVKCRIGANMIWDAEKRGVLKPGVELVEPTSGNTGIALAYVAAARGYKLTLTMPETMSIERRKLLKALGANLVLTEGAKGMKGAIQKAEEIVASNPEKYLLLQQFSNPANPEIHEKTTGPEIWEDTDGQVDVFIAGVGTGGTLTGVSRYIKGTKGKTDLISVAVEPTDSPVIAQALAGEEIKPGPHKIQGIGAGFIPANLDLKLVDKVIGITNEEAISTARRLMEEEGILAGISSGAAVAAALKLQEDESFTNKNIVVILPSSGERYLSTALFADLFTEKELQQ.

2 residues coordinate hydrogen sulfide: Asn-8 and Arg-35. Residue Lys-42 is modified to N6-(pyridoxal phosphate)lysine. Pyridoxal 5'-phosphate-binding positions include Asn-72 and 177 to 181 (GTGGT). Leu-269 lines the hydrogen sulfide pocket. Ser-273 serves as a coordination point for pyridoxal 5'-phosphate.

This sequence belongs to the cysteine synthase/cystathionine beta-synthase family. Homodimer. The cofactor is pyridoxal 5'-phosphate.

The enzyme catalyses O-acetyl-L-serine + hydrogen sulfide = L-cysteine + acetate. Its pathway is amino-acid biosynthesis; L-cysteine biosynthesis; L-cysteine from L-serine: step 2/2. In Escherichia coli O157:H7, this protein is Cysteine synthase A (cysK).